We begin with the raw amino-acid sequence, 792 residues long: Lon protease (792 aa).

A Lon N-terminal domain is found at 16–208 (LPILPLRETV…KVTYYLTREL (193 aa)). 360-367 (GPPGVGKT) provides a ligand contact to ATP. Positions 597–778 (KDEVGVATGL…DEVLNLALLE (182 aa)) constitute a Lon proteolytic domain. Residues Ser684 and Lys727 contribute to the active site.

The protein belongs to the peptidase S16 family. As to quaternary structure, homohexamer. Organized in a ring with a central cavity.

It localises to the cytoplasm. The enzyme catalyses Hydrolysis of proteins in presence of ATP.. Its function is as follows. ATP-dependent serine protease that mediates the selective degradation of mutant and abnormal proteins as well as certain short-lived regulatory proteins. Required for cellular homeostasis and for survival from DNA damage and developmental changes induced by stress. Degrades polypeptides processively to yield small peptide fragments that are 5 to 10 amino acids long. Binds to DNA in a double-stranded, site-specific manner. This chain is Lon protease, found in Dictyoglomus thermophilum (strain ATCC 35947 / DSM 3960 / H-6-12).